A 564-amino-acid polypeptide reads, in one-letter code: MSYPADDYESEAAYDPYAYPGDYDMHTGDPKQDLAYERQYEQQTYQVIPEVIKNFIQYFHKTVSDLIDQKVYELQASRVSSDVIDQKVYEIQDIYENSWTKLTERFFKNTPWPEAEAIAPQVGNDAVFLILYKELYYRHIYAKVSGGPSLEQRFESYYNYCNLFNYILNADGPAPLELPNQWLWDIIDEFIYQFQSFSQYRCKTAKKSEGEMDFLRSNPKVWNVHSVLNVLHSLVDKSNINRQLEVYTSGGDPESVAGEYGRHSLYKMLGYFSLVGLLRLHSLLGDYYQAIKVLENIELNKKSMYSRVPECQVTTYYYVGFAYLMMRRYQDAIRVFANILLYIQRTKSMFQRTTYKYEMINKQNEQMHALLAIALTMYPMRIDESIHLQLREKYGDKMLRMQKGDPQVYEELFSYACPKFLSPVVPNYDNVHPNYHKEPFLQQLKVFSDEVQQQAQLSTIRSFLKLYTTMPVAKLAGFLDLTEQEFRIQLLVFKHKMKNLVWTSGISALDGEFQSASEVDFYIDKDMIHIADTKVARRYGDFFIRQIHKFEELNRTLKKMGQRP.

Serine 2 carries the post-translational modification N-acetylserine. One can recognise a PCI domain in the interval 331–537 (DAIRVFANIL…IHIADTKVAR (207 aa)). An N6-acetyllysine mark is found at lysine 465 and lysine 549.

It belongs to the eIF-3 subunit L family. As to quaternary structure, component of the eukaryotic translation initiation factor 3 (eIF-3) complex, which is composed of 13 subunits: EIF3A, EIF3B, EIF3C, EIF3D, EIF3E, EIF3F, EIF3G, EIF3H, EIF3I, EIF3J, EIF3K, EIF3L and EIF3M. The eIF-3 complex appears to include 3 stable modules: module A is composed of EIF3A, EIF3B, EIF3G and EIF3I; module B is composed of EIF3F, EIF3H, and EIF3M; and module C is composed of EIF3C, EIF3D, EIF3E, EIF3K and EIF3L. EIF3C of module C binds EIF3B of module A and EIF3H of module B, thereby linking the three modules. EIF3J is a labile subunit that binds to the eIF-3 complex via EIF3B. The eIF-3 complex may interact with RPS6KB1 under conditions of nutrient depletion. Mitogenic stimulation may lead to binding and activation of a complex composed of MTOR and RPTOR, leading to phosphorylation and release of RPS6KB1 and binding of EIF4B to eIF-3. Interacts with RRN3.

The protein localises to the cytoplasm. Its function is as follows. Component of the eukaryotic translation initiation factor 3 (eIF-3) complex, which is required for several steps in the initiation of protein synthesis. The eIF-3 complex associates with the 40S ribosome and facilitates the recruitment of eIF-1, eIF-1A, eIF-2:GTP:methionyl-tRNAi and eIF-5 to form the 43S pre-initiation complex (43S PIC). The eIF-3 complex stimulates mRNA recruitment to the 43S PIC and scanning of the mRNA for AUG recognition. The eIF-3 complex is also required for disassembly and recycling of post-termination ribosomal complexes and subsequently prevents premature joining of the 40S and 60S ribosomal subunits prior to initiation. The eIF-3 complex specifically targets and initiates translation of a subset of mRNAs involved in cell proliferation, including cell cycling, differentiation and apoptosis, and uses different modes of RNA stem-loop binding to exert either translational activation or repression. This chain is Eukaryotic translation initiation factor 3 subunit L (Eif3l), found in Mus musculus (Mouse).